We begin with the raw amino-acid sequence, 469 residues long: ATP synthase subunit beta (469 aa).

156–163 is a binding site for ATP; that stretch reads GGAGVGKT.

The protein belongs to the ATPase alpha/beta chains family. F-type ATPases have 2 components, CF(1) - the catalytic core - and CF(0) - the membrane proton channel. CF(1) has five subunits: alpha(3), beta(3), gamma(1), delta(1), epsilon(1). CF(0) has three main subunits: a(1), b(2) and c(9-12). The alpha and beta chains form an alternating ring which encloses part of the gamma chain. CF(1) is attached to CF(0) by a central stalk formed by the gamma and epsilon chains, while a peripheral stalk is formed by the delta and b chains.

It localises to the cell membrane. It carries out the reaction ATP + H2O + 4 H(+)(in) = ADP + phosphate + 5 H(+)(out). Its function is as follows. Produces ATP from ADP in the presence of a proton gradient across the membrane. The catalytic sites are hosted primarily by the beta subunits. This Bacillus anthracis (strain CDC 684 / NRRL 3495) protein is ATP synthase subunit beta.